We begin with the raw amino-acid sequence, 692 residues long: Formate hydrogenlyase transcriptional activator FhlA (692 aa).

Residues 202–344 (DMDELVSEVA…QIAERVAIAV (143 aa)) enclose the GAF domain. Residues 381–610 (IIGRSEAMYS…LENVIERAVL (230 aa)) form the Sigma-54 factor interaction domain. Residues 409 to 416 (GETGTGKE) and 472 to 481 (ADKSSLFLDE) each bind ATP. Positions 663 to 682 (PKGAAQRLGLKRTTLLSRMK) form a DNA-binding region, H-T-H motif.

Functionally, required for induction of expression of the formate dehydrogenase H and hydrogenase-3 structural genes. Also activates expression of hyf operon (encodes the silent hydrogenase-4 gene cluster). This chain is Formate hydrogenlyase transcriptional activator FhlA (fhlA), found in Escherichia coli (strain K12).